Reading from the N-terminus, the 533-residue chain is Laccase-2 (533 aa).

The N-terminal stretch at 1–23 (MFPGARILATLTLALHLLHGAHA) is a signal peptide. 3 Plastocyanin-like domains span residues 25–171 (IGPA…LSLY), 173–336 (IDNA…LETN), and 382–501 (TAPV…FAED). Residues His-98, His-100, His-143, and His-145 each contribute to the Cu cation site. Disulfide bonds link Cys-119–Cys-516 and Cys-151–Cys-238. Residues His-427, His-430, and His-432 each coordinate Cu cation. Asn-467 carries N-linked (GlcNAc...) (high mannose) asparagine glycosylation. Positions 483, 484, 485, and 489 each coordinate Cu cation.

Belongs to the multicopper oxidase family. Cu cation serves as cofactor. In terms of processing, N-glycosylated at Asn-467; contains a high-mannose glycan with a varying number of mannose residues.

The protein resides in the secreted. The enzyme catalyses 4 hydroquinone + O2 = 4 benzosemiquinone + 2 H2O. Functionally, lignin degradation and detoxification of lignin-derived products. The sequence is that of Laccase-2 (POX2) from Pleurotus ostreatus (Oyster mushroom).